The primary structure comprises 392 residues: Acetyl-CoA acetyltransferase (392 aa).

The active-site Acyl-thioester intermediate is the Cys85. CoA is bound by residues Cys206, Ser207, Val209, and Lys332. His336 acts as the Proton acceptor in catalysis.

It belongs to the thiolase-like superfamily. Thiolase family. As to quaternary structure, interacts with HMG-CoA synthase (HMGCS) that catalyzes the second step in the pathway and with a DUF35 protein. The acetoacetyl-CoA thiolase/HMG-CoA synthase complex channels the intermediate via a fused CoA-binding site, which allows for efficient coupling of the endergonic thiolase reaction with the exergonic HMGCS reaction.

The enzyme catalyses 2 acetyl-CoA = acetoacetyl-CoA + CoA. The protein operates within metabolic intermediate biosynthesis; (R)-mevalonate biosynthesis; (R)-mevalonate from acetyl-CoA: step 1/3. Its function is as follows. Catalyzes the condensation of two acetyl-coA molecules into acetoacetyl-CoA. Functions in the mevalonate (MVA) pathway leading to isopentenyl diphosphate (IPP), a key precursor for the biosynthesis of isoprenoid compounds that are building blocks of archaeal membrane lipids. The chain is Acetyl-CoA acetyltransferase from Methanocaldococcus jannaschii (strain ATCC 43067 / DSM 2661 / JAL-1 / JCM 10045 / NBRC 100440) (Methanococcus jannaschii).